Reading from the N-terminus, the 371-residue chain is RNA-binding protein 48 (371 aa).

An RRM domain is found at 46 to 124 (QYLLIQGVPA…GLLHVCYAPE (79 aa)). Disordered regions lie at residues 157-191 (KPVP…PESP) and 348-371 (VPKP…RRRI). The segment covering 158–170 (PVPEQKGTKDSRQ) has biased composition (basic and acidic residues).

The protein belongs to the RBM48 family. As to quaternary structure, component of the minor spliceosome. Within this complex, interacts with ARMC7 and PRPF8/PRP8.

Its function is as follows. As a component of the minor spliceosome, involved in the splicing of U12-type introns in pre-mRNAs. This Mus musculus (Mouse) protein is RNA-binding protein 48 (Rbm48).